Here is a 212-residue protein sequence, read N- to C-terminus: MKLSKYIDHTLLKPQATEKDILKLIEEAKTYDFASVCVNPSWVKLAYENLKDTDVKVCTVVGFPLGATSTASKVYETKVAIEDGADEIDMVISVGQLKSGNDEYVKEEIKKIVEASKNKLVKVIIETCLLTEEEKVKACTLSKEAGADYVKTSTGFSTGGAKPEDIKLMRETVGKDMGVKASGGIHTKEEMEAMIENGATRIGASCGVQLVR.

The active-site Proton donor/acceptor is the Asp89. Catalysis depends on Lys151, which acts as the Schiff-base intermediate with acetaldehyde. Lys180 (proton donor/acceptor) is an active-site residue.

Belongs to the DeoC/FbaB aldolase family. DeoC type 1 subfamily.

The protein localises to the cytoplasm. It catalyses the reaction 2-deoxy-D-ribose 5-phosphate = D-glyceraldehyde 3-phosphate + acetaldehyde. Its pathway is carbohydrate degradation; 2-deoxy-D-ribose 1-phosphate degradation; D-glyceraldehyde 3-phosphate and acetaldehyde from 2-deoxy-alpha-D-ribose 1-phosphate: step 2/2. Functionally, catalyzes a reversible aldol reaction between acetaldehyde and D-glyceraldehyde 3-phosphate to generate 2-deoxy-D-ribose 5-phosphate. In Clostridium botulinum (strain Langeland / NCTC 10281 / Type F), this protein is Deoxyribose-phosphate aldolase.